A 173-amino-acid chain; its full sequence is Adenine phosphoribosyltransferase (173 aa).

The protein belongs to the purine/pyrimidine phosphoribosyltransferase family. As to quaternary structure, homodimer.

It localises to the cytoplasm. It carries out the reaction AMP + diphosphate = 5-phospho-alpha-D-ribose 1-diphosphate + adenine. Its pathway is purine metabolism; AMP biosynthesis via salvage pathway; AMP from adenine: step 1/1. Catalyzes a salvage reaction resulting in the formation of AMP, that is energically less costly than de novo synthesis. The sequence is that of Adenine phosphoribosyltransferase from Listeria monocytogenes serotype 4b (strain CLIP80459).